The primary structure comprises 164 residues: uncharacterized protein (164 aa).

This is an uncharacterized protein from Escherichia coli (strain K12).